A 155-amino-acid polypeptide reads, in one-letter code: 3-hydroxyacyl-[acyl-carrier-protein] dehydratase FabZ (155 aa).

His58 is an active-site residue.

The protein belongs to the thioester dehydratase family. FabZ subfamily.

It is found in the cytoplasm. The catalysed reaction is a (3R)-hydroxyacyl-[ACP] = a (2E)-enoyl-[ACP] + H2O. Involved in unsaturated fatty acids biosynthesis. Catalyzes the dehydration of short chain beta-hydroxyacyl-ACPs and long chain saturated and unsaturated beta-hydroxyacyl-ACPs. The sequence is that of 3-hydroxyacyl-[acyl-carrier-protein] dehydratase FabZ from Rhizobium johnstonii (strain DSM 114642 / LMG 32736 / 3841) (Rhizobium leguminosarum bv. viciae).